A 66-amino-acid polypeptide reads, in one-letter code: Large ribosomal subunit protein bL35 (66 aa).

Basic residues predominate over residues 1–46 (MPKMKTHRASAKRFKRTGNGGLKRHHAFTGHRFHGKTKKQRRHLRK). Residues 1 to 50 (MPKMKTHRASAKRFKRTGNGGLKRHHAFTGHRFHGKTKKQRRHLRKAAMV) are disordered.

This sequence belongs to the bacterial ribosomal protein bL35 family.

The protein is Large ribosomal subunit protein bL35 of Lactobacillus delbrueckii subsp. bulgaricus (strain ATCC 11842 / DSM 20081 / BCRC 10696 / JCM 1002 / NBRC 13953 / NCIMB 11778 / NCTC 12712 / WDCM 00102 / Lb 14).